The primary structure comprises 130 residues: Glycoprotein hormone beta-5 (130 aa).

A signal peptide spans 1-24 (MKLVYLVLGAVALLLLGGPDSVLS). 5 disulfides stabilise this stretch: C36–C84, C50–C99, C60–C115, C64–C117, and C120–C127. N-linked (GlcNAc...) asparagine glycosylation is present at N87.

The protein belongs to the glycoprotein hormones subunit beta family. In terms of assembly, heterodimer with GPHA2; this heterodimer interacts with thyroid-stimulating hormone receptor (TSHR), and hence stimulates cAMP production. N-glycosylated. As to expression, expressed in the anterior lobe of pituitary.

The protein resides in the secreted. Functions as a heterodimeric glycoprotein hormone with GPHA2 able to bind and activate the thyroid-stimulating hormone receptor (TSHR), leading to increased cAMP production. Plays a central role in controlling thyroid cell metabolism. The protein is Glycoprotein hormone beta-5 (Gphb5) of Mus musculus (Mouse).